We begin with the raw amino-acid sequence, 541 residues long: Zinc finger CCHC domain-containing protein 7 (541 aa).

The tract at residues 111–144 (AEEKTQSPATSHSNKVAQKCKRNNKKPKPEERPG) is disordered. Positions 116 to 126 (QSPATSHSNKV) are enriched in polar residues. Residues lysine 129, lysine 136, lysine 138, lysine 234, and lysine 249 each participate in a glycyl lysine isopeptide (Lys-Gly) (interchain with G-Cter in SUMO2) cross-link. 3 consecutive CCHC-type zinc fingers follow at residues 236–253 (VTCR…NCPL), 258–275 (RACC…GCPA), and 299–316 (KRCD…ACPE). Lysine 334 participates in a covalent cross-link: Glycyl lysine isopeptide (Lys-Gly) (interchain with G-Cter in SUMO2). The CCHC-type 4 zinc-finger motif lies at 343–360 (VYCYNCAQKGHYGHECTE). Residues 394 to 541 (VKDLKKNGDF…KKKKPKPSGL (148 aa)) form a disordered region. Glycyl lysine isopeptide (Lys-Gly) (interchain with G-Cter in SUMO2) cross-links involve residues lysine 408 and lysine 431. A compositionally biased stretch (basic residues) spans 418-434 (RRHHDMRKSRSPRKYRR). Residues 435–452 (WPRENKETQKEKTRSREG) are compositionally biased toward basic and acidic residues. A Glycyl lysine isopeptide (Lys-Gly) (interchain with G-Cter in SUMO2) cross-link involves residue lysine 473. Residues 474 to 486 (PNASGCANNQKPS) are compositionally biased toward polar residues. Serine 477 bears the Phosphoserine mark. Residues lysine 484 and lysine 487 each participate in a glycyl lysine isopeptide (Lys-Gly) (interchain with G-Cter in SUMO2) cross-link. Basic residues predominate over residues 487–497 (KSLHHASHYHR). Composition is skewed to basic and acidic residues over residues 498 to 509 (LREERLLRESKR) and 517 to 527 (STEDGSHDDLF). Residue lysine 530 forms a Glycyl lysine isopeptide (Lys-Gly) (interchain with G-Cter in SUMO2) linkage. The segment covering 530 to 541 (KQKKKKPKPSGL) has biased composition (basic residues).

As to quaternary structure, component of a nucleolar TRAMP-like complex, an ATP-dependent exosome regulatory complex consisting of a helicase (MTREX), an oligadenylate polymerase (TENT4B or TENT4A), and a substrate specific RNA-binding factor (ZCCHC7 or ZCCHC8). Several TRAMP-like complexes exist with specific compositions and are associated with nuclear, or nucleolar RNA exosomes.

It localises to the nucleus. Its subcellular location is the nucleolus. This chain is Zinc finger CCHC domain-containing protein 7 (Zcchc7), found in Mus musculus (Mouse).